The following is a 248-amino-acid chain: MATEEGTGLTFYPMDQFIVSPLFGDGPVHFYTPTNVTLWMALAVAAIALLLVAGTRGRAVVPSRAQSIAELAYGFVYKMVEDVTGKDGIKYFPYIFTLFMFILVANFLGLIPMSFTTTSHIAVTAVLALAVFITVTVIGFVKNGAGFLSLFWVASAPLALRPILAVIEIISYFVRPVSHSIRLAGNMMAGHAVLKVFAGFAQVAAVAPIAIIGVMAIYGLEVLVSAIQAYVFTILTCVYLKDALHPHH.

Helical transmembrane passes span 34–54 (TNVT…LVAG), 91–111 (YFPY…LGLI), 121–141 (IAVT…IGFV), 147–167 (FLSL…LAVI), 197–217 (FAGF…VMAI), and 220–240 (LEVL…CVYL).

It belongs to the ATPase A chain family. In terms of assembly, F-type ATPases have 2 components, CF(1) - the catalytic core - and CF(0) - the membrane proton channel. CF(1) has five subunits: alpha(3), beta(3), gamma(1), delta(1), epsilon(1). CF(0) has four main subunits: a, b, b' and c.

The protein localises to the cell inner membrane. Its function is as follows. Key component of the proton channel; it plays a direct role in the translocation of protons across the membrane. The sequence is that of ATP synthase subunit a from Dinoroseobacter shibae (strain DSM 16493 / NCIMB 14021 / DFL 12).